Reading from the N-terminus, the 219-residue chain is Large ribosomal subunit protein uL1 (219 aa).

This sequence belongs to the universal ribosomal protein uL1 family. As to quaternary structure, part of the 50S ribosomal subunit.

Functionally, binds directly to 23S rRNA. Probably involved in E site tRNA release. Protein L1 is also a translational repressor protein, it controls the translation of its operon by binding to its mRNA. The protein is Large ribosomal subunit protein uL1 of Pyrococcus horikoshii (strain ATCC 700860 / DSM 12428 / JCM 9974 / NBRC 100139 / OT-3).